A 198-amino-acid chain; its full sequence is Recombination protein RecR (198 aa).

The segment at 57-72 (CSICGHITDQDPCYIC) adopts a C4-type zinc-finger fold. The region spanning 80–175 (SVICVVQDPK…KLSRIAHGLP (96 aa)) is the Toprim domain.

It belongs to the RecR family.

Functionally, may play a role in DNA repair. It seems to be involved in an RecBC-independent recombinational process of DNA repair. It may act with RecF and RecO. The polypeptide is Recombination protein RecR (Bacillus velezensis (strain DSM 23117 / BGSC 10A6 / LMG 26770 / FZB42) (Bacillus amyloliquefaciens subsp. plantarum)).